Consider the following 837-residue polypeptide: Granulocyte colony-stimulating factor receptor (837 aa).

The first 25 residues, 1-25 (MVGLGACTLTGVTLIFLLLPRSLES), serve as a signal peptide directing secretion. Disulfide bonds link cysteine 26-cysteine 52 and cysteine 46-cysteine 102. Residues 26–118 (CGHIEISPPV…SVQLLDQAEL (93 aa)) enclose the Ig-like C2-type domain. At 26–626 (CGHIEISPPV…LTLRTLDPSD (601 aa)) the chain is on the extracellular side. N-linked (GlcNAc...) asparagine glycans are attached at residues asparagine 51, asparagine 94, and asparagine 129. 5 Fibronectin type-III domains span residues 126-231 (SPSN…LEPP), 236-331 (LDIG…LRPT), 334-433 (APTI…NEGP), 434-529 (AVTG…GERA), and 530-624 (PPHA…TLDP). 5 cysteine pairs are disulfide-bonded: cysteine 132-cysteine 143, cysteine 168-cysteine 219, cysteine 178-cysteine 187, cysteine 249-cysteine 296, and cysteine 267-cysteine 310. N-linked (GlcNAc...) asparagine glycosylation is found at asparagine 186 and asparagine 279. The WSXWS motif motif lies at 319-323 (WSPWS). N-linked (GlcNAc...) asparagine glycans are attached at residues asparagine 392, asparagine 408, asparagine 474, asparagine 487, asparagine 582, and asparagine 613. Residues 627-650 (LNIFLGILCLVLLSTTCVVTWLCC) form a helical membrane-spanning segment. Over 651–837 (KRRGKTSFWS…VHGVEEQGGF (187 aa)) the chain is Cytoplasmic. The Box 1 motif motif lies at 658 to 666 (FWSDVPDPA).

This sequence belongs to the type I cytokine receptor family. Type 2 subfamily. As to quaternary structure, homodimer. The dimeric receptor binds two CSF3 molecules. Interacts with CEACAM1; down-regulates the CSF3R-STAT3 pathway through recruitment of PTPN6 that dephosphorylates CSF3R. In terms of processing, N-glycosylated. Found in bone marrow.

The protein resides in the membrane. Its function is as follows. Receptor for granulocyte colony-stimulating factor (CSF3). In addition it may function in some adhesion or recognition events at the cell surface. This Mus musculus (Mouse) protein is Granulocyte colony-stimulating factor receptor (Csf3r).